The following is a 465-amino-acid chain: Iron-sulfur cluster assembly SufBD family protein SH2035 (465 aa).

It belongs to the iron-sulfur cluster assembly SufBD family.

The polypeptide is Iron-sulfur cluster assembly SufBD family protein SH2035 (Staphylococcus haemolyticus (strain JCSC1435)).